The following is a 143-amino-acid chain: MFLGTYTPKLDDKGRLTLPAKFREELAGGLMVTKGQDHSLAVYPREEFAARARKAAAVSRTNPEARAFIRNLAASADEQRPDGQGRITLSAAHRTYAGLSKECVVIGSVDFLEIWDAAAWAAYQEETEAAFSSAEGEFLGDFL.

SpoVT-AbrB domains follow at residues 5-47 and 76-119; these read TYTP…PREE and ADEQ…DAAA.

This sequence belongs to the MraZ family. Forms oligomers.

The protein resides in the cytoplasm. It is found in the nucleoid. The protein is Transcriptional regulator MraZ of Corynebacterium diphtheriae (strain ATCC 700971 / NCTC 13129 / Biotype gravis).